A 248-amino-acid polypeptide reads, in one-letter code: 3-oxoacyl-[acyl-carrier-protein] reductase FabG (248 aa).

NADP(+)-binding positions include 14-17 (GSTR), T39, 65-66 (NL), and N92. S144 lines the substrate pocket. The Proton acceptor role is filled by Y157. NADP(+)-binding positions include 157 to 161 (YSTTK) and I190.

It belongs to the short-chain dehydrogenases/reductases (SDR) family. As to quaternary structure, homotetramer.

The catalysed reaction is a (3R)-hydroxyacyl-[ACP] + NADP(+) = a 3-oxoacyl-[ACP] + NADPH + H(+). It participates in lipid metabolism; fatty acid biosynthesis. Functionally, catalyzes the NADPH-dependent reduction of beta-ketoacyl-ACP substrates to beta-hydroxyacyl-ACP products, the first reductive step in the elongation cycle of fatty acid biosynthesis. This is 3-oxoacyl-[acyl-carrier-protein] reductase FabG (fabG) from Aquifex aeolicus (strain VF5).